The chain runs to 629 residues: Phosphomethylpyrimidine synthase (629 aa).

Residues N215, M244, Y273, H309, 329–331, 370–373, and E409 each bind substrate; these read SRG and DGLR. H413 is a Zn(2+) binding site. Position 436 (Y436) interacts with substrate. H477 lines the Zn(2+) pocket. The [4Fe-4S] cluster site is built by C557, C560, and C565. Residues 589–610 form a disordered region; it reads ENIKRETSAEEAEEAREGMSDM.

Belongs to the ThiC family. In terms of assembly, homodimer. The cofactor is [4Fe-4S] cluster.

It catalyses the reaction 5-amino-1-(5-phospho-beta-D-ribosyl)imidazole + S-adenosyl-L-methionine = 4-amino-2-methyl-5-(phosphooxymethyl)pyrimidine + CO + 5'-deoxyadenosine + formate + L-methionine + 3 H(+). Its pathway is cofactor biosynthesis; thiamine diphosphate biosynthesis. Catalyzes the synthesis of the hydroxymethylpyrimidine phosphate (HMP-P) moiety of thiamine from aminoimidazole ribotide (AIR) in a radical S-adenosyl-L-methionine (SAM)-dependent reaction. This Erythrobacter litoralis (strain HTCC2594) protein is Phosphomethylpyrimidine synthase.